The sequence spans 514 residues: 3-octaprenyl-4-hydroxybenzoate carboxy-lyase (514 aa).

Asn177 is a binding site for Mn(2+). Residues 180–182 (IYR), 194–196 (RWL), and 199–200 (RG) contribute to the prenylated FMN site. Glu243 is a Mn(2+) binding site. Asp314 (proton donor) is an active-site residue.

This sequence belongs to the UbiD family. In terms of assembly, homohexamer. Prenylated FMN is required as a cofactor. Mn(2+) serves as cofactor.

The protein localises to the cell membrane. The enzyme catalyses a 4-hydroxy-3-(all-trans-polyprenyl)benzoate + H(+) = a 2-(all-trans-polyprenyl)phenol + CO2. It participates in cofactor biosynthesis; ubiquinone biosynthesis. Catalyzes the decarboxylation of 3-octaprenyl-4-hydroxy benzoate to 2-octaprenylphenol, an intermediate step in ubiquinone biosynthesis. The protein is 3-octaprenyl-4-hydroxybenzoate carboxy-lyase of Bordetella petrii (strain ATCC BAA-461 / DSM 12804 / CCUG 43448).